The sequence spans 389 residues: Gastricsin (389 aa).

Positions Met1–Ala16 are cleaved as a signal peptide. Positions Lys17–Phe59 are cleaved as a propeptide — activation peptide. Positions Tyr73–Ala386 constitute a Peptidase A1 domain. The active site involves Asp91. 2 disulfide bridges follow: Cys104–Cys109 and Cys268–Cys272. The active site involves Asp277. A disulfide bridge connects residues Cys311 and Cys344.

Belongs to the peptidase A1 family.

The protein localises to the secreted. The enzyme catalyses More restricted specificity than pepsin A, but shows preferential cleavage at Tyr-|-Xaa bonds. High activity on hemoglobin.. Functionally, hydrolyzes a variety of proteins. This is Gastricsin (PGC) from Rhinolophus ferrumequinum (Greater horseshoe bat).